The chain runs to 636 residues: Biosynthetic arginine decarboxylase (636 aa).

Lys-101 carries the N6-(pyridoxal phosphate)lysine modification. 286–296 lines the substrate pocket; it reads FDVGGGLAVDY.

This sequence belongs to the Orn/Lys/Arg decarboxylase class-II family. SpeA subfamily. The cofactor is Mg(2+). Pyridoxal 5'-phosphate serves as cofactor.

The catalysed reaction is L-arginine + H(+) = agmatine + CO2. Its pathway is amine and polyamine biosynthesis; agmatine biosynthesis; agmatine from L-arginine: step 1/1. In terms of biological role, catalyzes the biosynthesis of agmatine from arginine. The chain is Biosynthetic arginine decarboxylase from Shewanella amazonensis (strain ATCC BAA-1098 / SB2B).